A 207-amino-acid polypeptide reads, in one-letter code: NADH-quinone oxidoreductase subunit A (207 aa).

3 helical membrane passes run 6 to 26 (WSAIAFILAAIALVVFMLVVP), 62 to 82 (LVAIFFVIFDLEALYLYAYAV), and 87 to 107 (AGWLGFAAAAIFITILIIGLV).

The protein belongs to the complex I subunit 3 family. In terms of assembly, NDH-1 is composed of 14 different subunits. Subunits NuoA, H, J, K, L, M, N constitute the membrane sector of the complex.

It localises to the cell inner membrane. The enzyme catalyses a quinone + NADH + 5 H(+)(in) = a quinol + NAD(+) + 4 H(+)(out). In terms of biological role, NDH-1 shuttles electrons from NADH, via FMN and iron-sulfur (Fe-S) centers, to quinones in the respiratory chain. The immediate electron acceptor for the enzyme in this species is believed to be ubiquinone. Couples the redox reaction to proton translocation (for every two electrons transferred, four hydrogen ions are translocated across the cytoplasmic membrane), and thus conserves the redox energy in a proton gradient. The chain is NADH-quinone oxidoreductase subunit A from Psychrobacter arcticus (strain DSM 17307 / VKM B-2377 / 273-4).